We begin with the raw amino-acid sequence, 342 residues long: tRNA N6-adenosine threonylcarbamoyltransferase (342 aa).

His-114 and His-118 together coordinate Fe cation. Residues 136–140 (LVSGG), Asp-169, Gly-182, Asp-186, and Asn-275 contribute to the substrate site. A Fe cation-binding site is contributed by Asp-301.

This sequence belongs to the KAE1 / TsaD family. Fe(2+) serves as cofactor.

The protein resides in the cytoplasm. It catalyses the reaction L-threonylcarbamoyladenylate + adenosine(37) in tRNA = N(6)-L-threonylcarbamoyladenosine(37) in tRNA + AMP + H(+). In terms of biological role, required for the formation of a threonylcarbamoyl group on adenosine at position 37 (t(6)A37) in tRNAs that read codons beginning with adenine. Is involved in the transfer of the threonylcarbamoyl moiety of threonylcarbamoyl-AMP (TC-AMP) to the N6 group of A37, together with TsaE and TsaB. TsaD likely plays a direct catalytic role in this reaction. The sequence is that of tRNA N6-adenosine threonylcarbamoyltransferase from Streptococcus pyogenes serotype M2 (strain MGAS10270).